Here is a 318-residue protein sequence, read N- to C-terminus: Beta-galactosidase small subunit (318 aa).

The protein belongs to the bacterial beta-galactosidase small subunit family. Heterodimer of a large (LacL) and a small subunit (LacM).

The catalysed reaction is Hydrolysis of terminal non-reducing beta-D-galactose residues in beta-D-galactosides.. Its function is as follows. Component of a beta-galactosidase. This Latilactobacillus sakei (Lactobacillus sakei) protein is Beta-galactosidase small subunit.